Here is a 158-residue protein sequence, read N- to C-terminus: Putative metalloproteinase inhibitor tag-225 (158 aa).

An N-terminal signal peptide occupies residues 1 to 20 (MQNLSLSLVILSVLIAVTLA). Residue C21 coordinates Zn(2+). The involved in metalloproteinase-binding stretch occupies residues 21-25 (CKCRE). Cystine bridges form between C21/C96, C23/C123, and C33/C158. One can recognise an NTR domain in the interval 21–158 (CKCREQSTKE…LQSQVKSIKC (138 aa)). N79 carries N-linked (GlcNAc...) asparagine glycosylation. The segment at 93-94 (AP) is involved in metalloproteinase-binding.

The protein belongs to the protease inhibitor I35 (TIMP) family.

It is found in the secreted. Functionally, complexes with metalloproteinases and irreversibly inactivates them by binding to their catalytic zinc cofactor. This Caenorhabditis elegans protein is Putative metalloproteinase inhibitor tag-225 (tag-225).